A 121-amino-acid polypeptide reads, in one-letter code: Large ribosomal subunit protein bL12 (121 aa).

It belongs to the bacterial ribosomal protein bL12 family. As to quaternary structure, homodimer. Part of the ribosomal stalk of the 50S ribosomal subunit. Forms a multimeric L10(L12)X complex, where L10 forms an elongated spine to which 2 to 4 L12 dimers bind in a sequential fashion. Binds GTP-bound translation factors.

Functionally, forms part of the ribosomal stalk which helps the ribosome interact with GTP-bound translation factors. Is thus essential for accurate translation. This Anoxybacillus flavithermus (strain DSM 21510 / WK1) protein is Large ribosomal subunit protein bL12.